Consider the following 174-residue polypeptide: Large ribosomal subunit protein uL15 (174 aa).

Disordered regions lie at residues 1–56 and 150–174; these read MKLH…GQMR and VERR…TPGA. Residues 21–35 show a composition bias toward gly residues; that stretch reads RGIGSGKGKTGGKGM.

This sequence belongs to the universal ribosomal protein uL15 family. Part of the 50S ribosomal subunit.

In terms of biological role, binds to the 23S rRNA. The protein is Large ribosomal subunit protein uL15 of Roseiflexus castenholzii (strain DSM 13941 / HLO8).